The primary structure comprises 97 residues: Co-chaperonin GroES (97 aa).

It belongs to the GroES chaperonin family. In terms of assembly, heptamer of 7 subunits arranged in a ring. Interacts with the chaperonin GroEL.

Its subcellular location is the cytoplasm. Its function is as follows. Together with the chaperonin GroEL, plays an essential role in assisting protein folding. The GroEL-GroES system forms a nano-cage that allows encapsulation of the non-native substrate proteins and provides a physical environment optimized to promote and accelerate protein folding. GroES binds to the apical surface of the GroEL ring, thereby capping the opening of the GroEL channel. The polypeptide is Co-chaperonin GroES (Stutzerimonas stutzeri (Pseudomonas stutzeri)).